A 1875-amino-acid polypeptide reads, in one-letter code: Nonribosomal peptide synthetase otaB (1875 aa).

Residues G202 to A590 form an adenylation 1 region. Residues S724–G800 form the Carrier domain. The residue at position 761 (S761) is an O-(pantetheine 4'-phosphoryl)serine. The interval E836–L1245 is condensation. Residues Q1264–R1659 are adenylation 2.

Belongs to the NRP synthetase family.

It carries out the reaction 7-carboxymellein + L-phenylalanine + ATP = ochratoxin B + ADP + phosphate + H(+). The protein operates within mycotoxin biosynthesis. In terms of biological role, nonribosomal peptide synthetase; part of the gene cluster that mediates the biosynthesis of ochratoxin A (OTA), a mycotoxin composed of a chlorinated type I polyketide dihydroisocoumarin moiety linked to L-phenylalanine, and demonstrated to have nephrotoxic, immunotoxic, genotoxic, neurotoxic, and teratogenic properties. OtaB is responsible for the linking of phenylalanine to the dihydroisocoumarin ring. The pathway begins with the highly reducing polyketide synthase otaA that catalyzes the formation of the isocoumarin group during the initial stages of biosynthesis, starting from one acetate and 4 malonate units, to originate the characteristic pentaketide skeleton 7-methylmellein (7-MM) of the OTA molecule. The newly identified cyclase otaY might be involved in the polyketide cyclization reaction during the initial steps of the OTA biosynthesis. 7-MM is then oxidized into 7-carboxymellein (also called ochratoxin beta) by the cytochrome P450 monooxygenase otaC. The NRPS encoded by the otaB gene is involved in the linking of phenylalanine to the dihydroisocoumarin ring. The reaction catalyzed by NRPS results in the production of ochratoxin B (OTB), which is the non-chlorinated analog of OTA and which subsequently serves as the substrate of the halogenase otaD for chlorination activity to form the final molecular structure of OTA, containing a chlorine atom in the C-5 position of the molecule. The polypeptide is Nonribosomal peptide synthetase otaB (Aspergillus carbonarius (strain ITEM 5010)).